We begin with the raw amino-acid sequence, 95 residues long: Aspartyl/glutamyl-tRNA(Asn/Gln) amidotransferase subunit C (95 aa).

This sequence belongs to the GatC family. In terms of assembly, heterotrimer of A, B and C subunits.

The catalysed reaction is L-glutamyl-tRNA(Gln) + L-glutamine + ATP + H2O = L-glutaminyl-tRNA(Gln) + L-glutamate + ADP + phosphate + H(+). It carries out the reaction L-aspartyl-tRNA(Asn) + L-glutamine + ATP + H2O = L-asparaginyl-tRNA(Asn) + L-glutamate + ADP + phosphate + 2 H(+). In terms of biological role, allows the formation of correctly charged Asn-tRNA(Asn) or Gln-tRNA(Gln) through the transamidation of misacylated Asp-tRNA(Asn) or Glu-tRNA(Gln) in organisms which lack either or both of asparaginyl-tRNA or glutaminyl-tRNA synthetases. The reaction takes place in the presence of glutamine and ATP through an activated phospho-Asp-tRNA(Asn) or phospho-Glu-tRNA(Gln). The sequence is that of Aspartyl/glutamyl-tRNA(Asn/Gln) amidotransferase subunit C from Bartonella henselae (strain ATCC 49882 / DSM 28221 / CCUG 30454 / Houston 1) (Rochalimaea henselae).